We begin with the raw amino-acid sequence, 999 residues long: Hypoxia up-regulated protein 1 (999 aa).

A signal peptide spans 1 to 32 (MAATVRRQRPRRLLCWTLVAVLLADLLALSDT). Residues N155, N222, and N515 are each glycosylated (N-linked (GlcNAc...) asparagine). Positions 564–694 (VEDSPEEEST…KKQKPARKQK (131 aa)) are disordered. Position 567 is a phosphoserine (S567). Residues 574–583 (LTKLGNTISS) are compositionally biased toward polar residues. N-linked (GlcNAc...) asparagine glycosylation occurs at N596. Basic and acidic residues-rich tracts occupy residues 611–626 (GSKD…KEET) and 641–670 (PKGD…EEKG). N-linked (GlcNAc...) asparagine glycans are attached at residues N830, N862, and N869. N6-acetyllysine is present on K883. Residues 909–999 (AKFTKPRPRP…QKRSSKNDEL (91 aa)) form a disordered region. N-linked (GlcNAc...) asparagine glycans are attached at residues N922 and N931. A compositionally biased stretch (basic and acidic residues) spans 949-962 (EEAKPILEPDKEET). The Prevents secretion from ER signature appears at 996-999 (NDEL).

This sequence belongs to the heat shock protein 70 family. In terms of assembly, part of a large chaperone multiprotein complex comprising DNAJB11, HSP90B1, HSPA5, HYOU, PDIA2, PDIA4, PDIA6, PPIB, SDF2L1, UGGT1 and very small amounts of ERP29, but not, or at very low levels, CALR nor CANX.

It localises to the endoplasmic reticulum lumen. Functionally, has a pivotal role in cytoprotective cellular mechanisms triggered by oxygen deprivation. Promotes HSPA5/BiP-mediated ATP nucleotide exchange and thereby activates the unfolded protein response (UPR) pathway in the presence of endoplasmic reticulum stress. May play a role as a molecular chaperone and participate in protein folding. The sequence is that of Hypoxia up-regulated protein 1 (HYOU1) from Cricetulus griseus (Chinese hamster).